The sequence spans 56 residues: Bacteriocin sublancin-168 (56 aa).

Positions 1-19 are excised as a propeptide; the sequence is MEKLFKEVKLEELENQKGS. 2 disulfides stabilise this stretch: C26/C55 and C33/C48. C41 is a glycosylation site (S-linked (Glc) cysteine; by host).

Monomer. Post-translationally, production of active sublancin-168 requires at least one thiol-disulfide oxidoreductase (BdbB or, in its absence, BdbC). Membrane translocation and cleavage of the precursor are probably performed by SunT.

The protein resides in the secreted. Functionally, bacteriocin active against Gram-positive bacteria. Inhibits B.cereus spore outgrowth, after the germination stage, approximately 1000-fold better than it inhibits exponential growth of the same cells. Inhibits B.subtilis strain ATCC 6633. The polypeptide is Bacteriocin sublancin-168 (sunA) (Bacillus pumilus (Bacillus mesentericus)).